The following is a 344-amino-acid chain: MKAMLLHKFGEPLRLEDMDVPKVGVGQVLVKVDYAGVCHTDLSVRSGAIFNRISSSKPTLPLVIGHEIAGEVVELGGNVEGFKKSDKVLIDPWIGDGSCHYCKIGEDQYCDNPKWLGINVNGGYGEYVLVPDYRYMFKLRNLSTSTASPLACSGVTAYRALRLANLDPSKSVMIIGAGGGLGSIAVQIAKAIHGSFIIGVDVSEEGLKLATNLGADYVTSKVDEEEVRKITTGRGVDAIIDFVGSEFTTSNYYTLLAKLGRYVKVGTYGGGLPHDAGLRLHSMGWQFIGTLTGNRKDFLEVLELAENGKIKPMITKVLSLEEANDALDNLEKGKVSGRQVLKVT.

Zn(2+) contacts are provided by Cys-38, His-66, Asp-96, Cys-99, Cys-102, Cys-110, and Cys-152.

It belongs to the zinc-containing alcohol dehydrogenase family. Homodimer and homotetramer. Zn(2+) serves as cofactor.

It catalyses the reaction a primary alcohol + NAD(+) = an aldehyde + NADH + H(+). It carries out the reaction a secondary alcohol + NAD(+) = a ketone + NADH + H(+). The sequence is that of NAD-dependent alcohol dehydrogenase (adh) from Sulfolobus acidocaldarius (strain ATCC 33909 / DSM 639 / JCM 8929 / NBRC 15157 / NCIMB 11770).